The chain runs to 338 residues: Solute carrier family 35 member G5 (338 aa).

The tract at residues 1–28 is disordered; sequence MAGSHPYFNLPDSTHPSPPSGPPSLRWH. Helical transmembrane passes span 37–57, 67–87, 105–125, 160–180, 190–210, 221–241, 250–270, 281–301, and 310–330; these read TNGL…VGPL, LPSL…ALLL, CFCA…VQVV, CGLL…LWTL, ALGY…LLVY, TVAF…LFVL, LLSW…FTCV, LVCA…YYML, and IMGA…NLSC. Residues 49 to 174 form the EamA 1 domain; it reads LPAGFVGPLS…SILGLIIIVG (126 aa). Residues 272 to 325 form the EamA 2 domain; sequence YAVTKAHPALVCAVLHSEVVVALILQYYMLPETVAPSDIMGAGVVLGNITIIPA.

This sequence belongs to the SLC35G solute transporter family.

Its subcellular location is the membrane. This Gorilla gorilla gorilla (Western lowland gorilla) protein is Solute carrier family 35 member G5 (SLC35G5).